The primary structure comprises 297 residues: F-box only protein 2 (297 aa).

Residues 1 to 47 (MDGDGDPESVSHPEEASPEEQPEEAGAEASAEEEQLREAEEEEEAEA) are disordered. Residues 16 to 47 (ASPEEQPEEAGAEASAEEEQLREAEEEEEAEA) show a composition bias toward acidic residues. One can recognise an F-box domain in the interval 48–95 (VEYLAELPEPLLLRVLAELPATELVQACRLVCLRWKELVDGAPLWLLK). Position 106 is a phosphoserine (serine 106). The FBA domain occupies 117 to 297 (FYFLSKRRRN…VTNSSVWVEP (181 aa)). A carbohydrate is bound by residues 214 to 216 (RTD) and 279 to 280 (YW).

As to quaternary structure, component of the SCF(FBXO2) complex consisting of CUL1, RBX1, SKP1 and FBXO2. Predominantly detected as heterodimer with SKP1; the heterodimer with SKP1 is not part of the SCF(FBXO2) complex. As to expression, detected in brain and cochlea, in epithelial support cells and hair cells of the organ of Corti (at protein level).

Its subcellular location is the cytoplasm. The protein resides in the microsome membrane. It functions in the pathway protein modification; protein ubiquitination. Substrate recognition component of a SCF (SKP1-CUL1-F-box protein) E3 ubiquitin-protein ligase complex that mediates the ubiquitination and subsequent proteasomal degradation of target proteins. Involved in the endoplasmic reticulum-associated degradation pathway (ERAD) for misfolded lumenal proteins by recognizing and binding sugar chains on unfolded glycoproteins that are retrotranslocated into the cytosol and promoting their ubiquitination and subsequent degradation. Prevents formation of cytosolic aggregates of unfolded glycoproteins that have been retrotranslocated into the cytosol. Able to recognize and bind denatured glycoproteins, preferentially those of the high-mannose type. The protein is F-box only protein 2 (Fbxo2) of Mus musculus (Mouse).